The primary structure comprises 397 residues: Phosphoglycerate kinase (397 aa).

Substrate contacts are provided by residues 25 to 27 (DLN), Arg-41, 64 to 67 (HLGR), Arg-118, and Arg-151. ATP is bound by residues Lys-202, Glu-324, and 350–353 (GGDT).

This sequence belongs to the phosphoglycerate kinase family. In terms of assembly, monomer.

Its subcellular location is the cytoplasm. It carries out the reaction (2R)-3-phosphoglycerate + ATP = (2R)-3-phospho-glyceroyl phosphate + ADP. It functions in the pathway carbohydrate degradation; glycolysis; pyruvate from D-glyceraldehyde 3-phosphate: step 2/5. The chain is Phosphoglycerate kinase from Janthinobacterium sp. (strain Marseille) (Minibacterium massiliensis).